Consider the following 55-residue polypeptide: uncharacterized protein (55 aa).

This is an uncharacterized protein from Mycoplasma mycoides.